The following is a 200-amino-acid chain: Holliday junction branch migration complex subunit RuvA (200 aa).

Positions 1–63 are domain I; sequence MFEYLTGLIT…EDAITLFGFA (63 aa). Residues 64–142 form a domain II region; sequence TQAEKRLFTQ…AVQDEVQLDF (79 aa). Positions 143–151 are flexible linker; sequence TAPGPLGPS. A domain III region spans residues 151-200; it reads SAALQDALAALESLGYTTKQVERVQKQLEGLQGELSTNDYLSQGLKLLSR.

This sequence belongs to the RuvA family. In terms of assembly, homotetramer. Forms an RuvA(8)-RuvB(12)-Holliday junction (HJ) complex. HJ DNA is sandwiched between 2 RuvA tetramers; dsDNA enters through RuvA and exits via RuvB. An RuvB hexamer assembles on each DNA strand where it exits the tetramer. Each RuvB hexamer is contacted by two RuvA subunits (via domain III) on 2 adjacent RuvB subunits; this complex drives branch migration. In the full resolvosome a probable DNA-RuvA(4)-RuvB(12)-RuvC(2) complex forms which resolves the HJ.

It is found in the cytoplasm. Its function is as follows. The RuvA-RuvB-RuvC complex processes Holliday junction (HJ) DNA during genetic recombination and DNA repair, while the RuvA-RuvB complex plays an important role in the rescue of blocked DNA replication forks via replication fork reversal (RFR). RuvA specifically binds to HJ cruciform DNA, conferring on it an open structure. The RuvB hexamer acts as an ATP-dependent pump, pulling dsDNA into and through the RuvAB complex. HJ branch migration allows RuvC to scan DNA until it finds its consensus sequence, where it cleaves and resolves the cruciform DNA. The protein is Holliday junction branch migration complex subunit RuvA of Limosilactobacillus fermentum (strain NBRC 3956 / LMG 18251) (Lactobacillus fermentum).